Here is a 173-residue protein sequence, read N- to C-terminus: C-phycocyanin beta subunit (173 aa).

Asn73 is subject to N4-methylasparagine. Residues Cys83 and Cys154 each coordinate (2R,3E)-phycocyanobilin.

Belongs to the phycobiliprotein family. As to quaternary structure, heterodimer of an alpha and a beta subunit. Heterodimers further assemble into trimers and the trimers into hexamers. Contains two covalently linked bilin chromophores.

The protein localises to the cellular thylakoid membrane. In terms of biological role, light-harvesting photosynthetic bile pigment-protein from the phycobiliprotein complex (phycobilisome, PBS). Phycocyanin is the major phycobiliprotein in the PBS rod. The polypeptide is C-phycocyanin beta subunit (cpcB) (Mastigocladus laminosus (Fischerella sp.)).